The following is an 84-amino-acid chain: Small ribosomal subunit protein uS17 (84 aa).

The protein belongs to the universal ribosomal protein uS17 family. Part of the 30S ribosomal subunit.

In terms of biological role, one of the primary rRNA binding proteins, it binds specifically to the 5'-end of 16S ribosomal RNA. This Borrelia recurrentis (strain A1) protein is Small ribosomal subunit protein uS17.